The primary structure comprises 345 residues: Phenylalanine--tRNA ligase alpha subunit (345 aa).

E253 is a Mg(2+) binding site.

It belongs to the class-II aminoacyl-tRNA synthetase family. Phe-tRNA synthetase alpha subunit type 1 subfamily. In terms of assembly, tetramer of two alpha and two beta subunits. Mg(2+) is required as a cofactor.

Its subcellular location is the cytoplasm. It catalyses the reaction tRNA(Phe) + L-phenylalanine + ATP = L-phenylalanyl-tRNA(Phe) + AMP + diphosphate + H(+). This is Phenylalanine--tRNA ligase alpha subunit from Nitratidesulfovibrio vulgaris (strain DSM 19637 / Miyazaki F) (Desulfovibrio vulgaris).